Reading from the N-terminus, the 252-residue chain is Endonuclease NucS (252 aa).

It belongs to the NucS endonuclease family.

It localises to the cytoplasm. Functionally, cleaves both 3' and 5' ssDNA extremities of branched DNA structures. The polypeptide is Endonuclease NucS (Sulfurisphaera tokodaii (strain DSM 16993 / JCM 10545 / NBRC 100140 / 7) (Sulfolobus tokodaii)).